Reading from the N-terminus, the 487-residue chain is Cysteine--tRNA ligase (487 aa).

Cysteine 29 contributes to the Zn(2+) binding site. Residues 31 to 41 (VTVYDFCHIGH) carry the 'HIGH' region motif. Positions 209, 234, and 238 each coordinate Zn(2+). The 'KMSKS' region signature appears at 266 to 270 (KMSKS). Lysine 269 is a binding site for ATP.

It belongs to the class-I aminoacyl-tRNA synthetase family. As to quaternary structure, monomer. Zn(2+) is required as a cofactor.

It is found in the cytoplasm. It carries out the reaction tRNA(Cys) + L-cysteine + ATP = L-cysteinyl-tRNA(Cys) + AMP + diphosphate. The protein is Cysteine--tRNA ligase of Trichlorobacter lovleyi (strain ATCC BAA-1151 / DSM 17278 / SZ) (Geobacter lovleyi).